A 410-amino-acid chain; its full sequence is Na(+)/H(+) antiporter NhaS4 (410 aa).

Helical transmembrane passes span 7–27, 33–53, 69–89, 107–127, 135–155, 173–193, 199–219, 241–261, 291–311, 319–339, and 376–396; these read LLIL…GLLF, PPVI…LGLL, FLYL…GLEL, VSIF…LYSL, FIPF…PVLA, LTCA…AIAV, IFGA…MVTL, LLTF…WIGI, FVST…TDLG, WAVC…GVYV, and GVIS…TTII.

It belongs to the monovalent cation:proton antiporter 2 (CPA2) transporter (TC 2.A.37) family.

The protein localises to the membrane. Its function is as follows. Na(+)/H(+) antiporter. The sequence is that of Na(+)/H(+) antiporter NhaS4 (nhaS4) from Synechocystis sp. (strain ATCC 27184 / PCC 6803 / Kazusa).